The following is a 629-amino-acid chain: tRNA uridine 5-carboxymethylaminomethyl modification enzyme MnmG (629 aa).

FAD-binding positions include 14–19 (GAGHAG), Val-126, and Ser-181. 273 to 287 (GPRYCPSIEDKVVRF) serves as a coordination point for NAD(+). Gln-370 contributes to the FAD binding site.

This sequence belongs to the MnmG family. Homodimer. Heterotetramer of two MnmE and two MnmG subunits. The cofactor is FAD.

It is found in the cytoplasm. In terms of biological role, NAD-binding protein involved in the addition of a carboxymethylaminomethyl (cmnm) group at the wobble position (U34) of certain tRNAs, forming tRNA-cmnm(5)s(2)U34. The sequence is that of tRNA uridine 5-carboxymethylaminomethyl modification enzyme MnmG from Geobacillus thermodenitrificans (strain NG80-2).